Reading from the N-terminus, the 1219-residue chain is Type IV pilus biogenesis factor PilY1 homolog PD_0502 (1219 aa).

The signal sequence occupies residues 1–35; that stretch reads MVGMSRIILNNLFFFRCVVAVFSAHSLVISGAVHA. Residues 212 to 234 form a disordered region; it reads GLSTDPLNTEGQPYDPSRHPLNS. The Ca(2+) site is built by Q958, N960, I962, and D964.

It belongs to the PilY1 family.

Its subcellular location is the fimbrium. Its function is as follows. One of the three PilY1 homologs of X.fastidiosa, which are involved in bacterial twitching motility as component of the filamentous type IV pili (T4P). This chain is Type IV pilus biogenesis factor PilY1 homolog PD_0502, found in Xylella fastidiosa (strain Temecula1 / ATCC 700964).